Here is a 282-residue protein sequence, read N- to C-terminus: Acetylglutamate kinase (282 aa).

Residues 62 to 63 (GG), Arg-84, and Asn-178 each bind substrate.

It belongs to the acetylglutamate kinase family. ArgB subfamily.

The protein localises to the cytoplasm. The catalysed reaction is N-acetyl-L-glutamate + ATP = N-acetyl-L-glutamyl 5-phosphate + ADP. The protein operates within amino-acid biosynthesis; L-arginine biosynthesis; N(2)-acetyl-L-ornithine from L-glutamate: step 2/4. Its function is as follows. Catalyzes the ATP-dependent phosphorylation of N-acetyl-L-glutamate. This chain is Acetylglutamate kinase, found in Thermotoga petrophila (strain ATCC BAA-488 / DSM 13995 / JCM 10881 / RKU-1).